Consider the following 84-residue polypeptide: Putative antitoxin VapB37 (84 aa).

Functionally, probable antitoxin component of a type II toxin-antitoxin (TA) system. Its putative cognate toxin is VapC37. The chain is Putative antitoxin VapB37 (vapB37) from Mycobacterium tuberculosis (strain CDC 1551 / Oshkosh).